A 240-amino-acid polypeptide reads, in one-letter code: Tumor protein p53-inducible nuclear protein 1 (240 aa).

Positions 25 to 37 match the LIR motif; that stretch reads EKEDDEWILVDFI.

In terms of assembly, interacts with p53/TP53 and HIPK2. Interacts with PRKCG, GABARAP, GABARAPL1, GABARAPL2, MAP1LC3A, MAP1LC3B and MAP1LC3C. In terms of tissue distribution, ubiquitously expressed.

Its subcellular location is the cytoplasm. The protein localises to the cytosol. It localises to the nucleus. The protein resides in the PML body. It is found in the cytoplasmic vesicle. Its subcellular location is the autophagosome. Antiproliferative and proapoptotic protein involved in cell stress response which acts as a dual regulator of transcription and autophagy. Acts as a positive regulator of autophagy. In response to cellular stress or activation of autophagy, relocates to autophagosomes where it interacts with autophagosome-associated proteins GABARAP, GABARAPL1/L2, MAP1LC3A/B/C and regulates autophagy. Acts as an antioxidant and plays a major role in p53/TP53-driven oxidative stress response. Possesses both a p53/TP53-independent intracellular reactive oxygen species (ROS) regulatory function and a p53/TP53-dependent transcription regulatory function. Positively regulates p53/TP53 and p73/TP73 and stimulates their capacity to induce apoptosis and regulate cell cycle. In response to double-strand DNA breaks, promotes p53/TP53 phosphorylation on 'Ser-46' and subsequent apoptosis. Acts as a tumor suppressor by inducing cell death by an autophagy and caspase-dependent mechanism. Can reduce cell migration by regulating the expression of SPARC. This Homo sapiens (Human) protein is Tumor protein p53-inducible nuclear protein 1 (TP53INP1).